Consider the following 258-residue polypeptide: uncharacterized protein (258 aa).

This is an uncharacterized protein from Streptococcus pneumoniae serotype 4 (strain ATCC BAA-334 / TIGR4).